A 488-amino-acid polypeptide reads, in one-letter code: Germacrene A acid 8-beta-hydroxylase (488 aa).

The helical; Signal-anchor for type II membrane protein transmembrane segment at 2-22 (ELFTIFSIVVSSLILFTFWSL) threads the bilayer. An N-linked (GlcNAc...) asparagine glycan is attached at N407. A heme-binding site is contributed by C429.

Belongs to the cytochrome P450 family. Heme is required as a cofactor. Expressed in leaf primordia.

It localises to the membrane. The enzyme catalyses germacra-1(10),4,11(13)-trien-12-oate + reduced [NADPH--hemoprotein reductase] + O2 = 8beta-hydroxygermacra-1(10),4,11(13)-trien-12-oate + oxidized [NADPH--hemoprotein reductase] + H2O + H(+). Its pathway is secondary metabolite biosynthesis; terpenoid biosynthesis. Involved in the biosynthesis of germacrene-derived sesquiterpene lactones. Hydroxylates germacrene A acid to 8-beta-hydroxy-germacrene A acid. Unlike 6-alpha-hydroxy-germacrene A acid, this compound cannot undergo spontaneous lactonization. The sequence is that of Germacrene A acid 8-beta-hydroxylase from Helianthus annuus (Common sunflower).